The chain runs to 186 residues: uncharacterized protein (186 aa).

This sequence belongs to the geranylgeranyl reductase family. ChlP subfamily.

This is an uncharacterized protein from Methanosarcina barkeri.